Consider the following 137-residue polypeptide: Basic phospholipase A2 homolog 4a (137 aa).

The N-terminal stretch at 1-16 (MRTLWIVTVLLVGVEG) is a signal peptide. 7 disulfide bridges follow: cysteine 42–cysteine 131, cysteine 44–cysteine 60, cysteine 59–cysteine 111, cysteine 65–cysteine 137, cysteine 66–cysteine 104, cysteine 73–cysteine 97, and cysteine 91–cysteine 102. Residues 121–133 (KKYKIYPKFFCKK) are important for membrane-damaging activities in eukaryotes and bacteria; heparin-binding.

The protein belongs to the phospholipase A2 family. Group II subfamily. K49 sub-subfamily. In terms of assembly, homodimer; non-covalently linked. In terms of tissue distribution, expressed by the venom gland.

The protein localises to the secreted. Functionally, snake venom phospholipase A2 homolog that lacks enzymatic activity. Is myotoxic and displays edema-inducing activities. A model of myotoxic mechanism has been proposed: an apo Lys49-PLA2 is activated by the entrance of a hydrophobic molecule (e.g. fatty acid) at the hydrophobic channel of the protein leading to a reorientation of a monomer. This reorientation causes a transition between 'inactive' to 'active' states, causing alignment of C-terminal and membrane-docking sites (MDoS) side-by-side and putting the membrane-disruption sites (MDiS) in the same plane, exposed to solvent and in a symmetric position for both monomers. The MDoS region stabilizes the toxin on membrane by the interaction of charged residues with phospholipid head groups. Subsequently, the MDiS region destabilizes the membrane with penetration of hydrophobic residues. This insertion causes a disorganization of the membrane, allowing an uncontrolled influx of ions (i.e. calcium and sodium), and eventually triggering irreversible intracellular alterations and cell death. The sequence is that of Basic phospholipase A2 homolog 4a from Bothrops asper (Terciopelo).